The primary structure comprises 257 residues: Protein UL133 (257 aa).

The next 2 membrane-spanning stretches (helical) occupy residues 14–34 (WGVP…IWCL) and 45–65 (PGIA…AYLI). A disordered region spans residues 149–232 (PTVFVPPPSE…AMPQMPPGVA (84 aa)). A compositionally biased stretch (pro residues) spans 164-175 (VIPPQPPTPTSE). The span at 179–193 (KKGRAKDKPKGRPKN) shows a compositional bias: basic residues. Positions 214–228 (GGPPDASPPAMPQMP) are enriched in pro residues.

The protein localises to the host Golgi apparatus membrane. In Human cytomegalovirus (strain Merlin) (HHV-5), this protein is Protein UL133 (UL133).